We begin with the raw amino-acid sequence, 401 residues long: Voltage-gated potassium channel subunit beta-1 (401 aa).

Residues threonine 90, tryptophan 91, glutamine 97, and aspartate 119 each contribute to the NADP(+) site. Residue tyrosine 124 is the Proton donor/acceptor of the active site. NADP(+)-binding residues include asparagine 192, serine 222, arginine 223, glutamine 248, tryptophan 277, serine 278, proline 279, leucine 280, alanine 281, cysteine 282, lysine 288, arginine 298, glycine 357, serine 359, glutamine 363, glutamate 366, and asparagine 367.

It belongs to the shaker potassium channel beta subunit family. Homotetramer. Interaction with tetrameric potassium channel alpha subunits gives rise to a heterooctamer.

The protein resides in the cytoplasm. It localises to the membrane. Its subcellular location is the cell membrane. The enzyme catalyses a primary alcohol + NADP(+) = an aldehyde + NADPH + H(+). It catalyses the reaction a secondary alcohol + NADP(+) = a ketone + NADPH + H(+). Its function is as follows. Regulatory subunit of the voltage-gated potassium (Kv) channels composed of pore-forming and potassium-conducting alpha subunits and of regulatory beta subunits. The beta-1/KCNAB1 cytoplasmic subunit mediates closure of delayed rectifier potassium channels by physically obstructing the pore via its N-terminal domain and increases the speed of channel closure for other family members. Promotes the inactivation of KCNA1, KCNA2, KCNA4, KCNA5 and KCNA6 alpha subunit-containing channels. Displays nicotinamide adenine dinucleotide phosphate (NADPH)-dependent aldoketoreductase activity by catalyzing the NADPH-dependent reduction of a variety of endogenous aldehydes and ketones. The binding of NADPH is required for efficient down-regulation of potassium channel activity. Oxidation of the bound NADPH restrains N-terminal domain from blocking the channel, thereby decreasing N-type inactivation of potassium channel activity. In Gallus gallus (Chicken), this protein is Voltage-gated potassium channel subunit beta-1 (KCNAB1).